The sequence spans 203 residues: Urease accessory protein UreG (203 aa).

A GTP-binding site is contributed by 11 to 18; it reads GPVGSGKT.

Belongs to the SIMIBI class G3E GTPase family. UreG subfamily. In terms of assembly, homodimer. UreD, UreF and UreG form a complex that acts as a GTP-hydrolysis-dependent molecular chaperone, activating the urease apoprotein by helping to assemble the nickel containing metallocenter of UreC. The UreE protein probably delivers the nickel.

The protein localises to the cytoplasm. Its function is as follows. Facilitates the functional incorporation of the urease nickel metallocenter. This process requires GTP hydrolysis, probably effectuated by UreG. The chain is Urease accessory protein UreG from Prochlorococcus marinus (strain AS9601).